We begin with the raw amino-acid sequence, 329 residues long: ATP-dependent (S)-NAD(P)H-hydrate dehydratase (329 aa).

In terms of domain architecture, YjeF C-terminal spans 35–326 (TLQLVRNIIP…AEVGAAFSKL (292 aa)). The residue at position 67 (Tyr67) is a Phosphotyrosine. (6S)-NADPHX contacts are provided by residues Gly135 and 188–194 (NHMEFSR). Asn207 and Asn222 each carry an N-linked (GlcNAc...) asparagine glycan. Residues 228–232 (KGERD) and 247–256 (GSSRRCGGQG) contribute to the ATP site. Position 257 (Asp257) interacts with (6S)-NADPHX. A glycan (N-linked (GlcNAc...) asparagine) is linked at Asn279.

This sequence belongs to the NnrD/CARKD family. It depends on Mg(2+) as a cofactor.

It localises to the mitochondrion. It catalyses the reaction (6S)-NADHX + ATP = ADP + phosphate + NADH + H(+). The enzyme catalyses (6S)-NADPHX + ATP = ADP + phosphate + NADPH + H(+). In terms of biological role, catalyzes the dehydration of the S-form of NAD(P)HX at the expense of ATP, which is converted to ADP. Together with NAD(P)HX epimerase, which catalyzes the epimerization of the S- and R-forms, the enzyme allows the repair of both epimers of NAD(P)HX, a damaged form of NAD(P)H that is a result of enzymatic or heat-dependent hydration. The sequence is that of ATP-dependent (S)-NAD(P)H-hydrate dehydratase from Pongo abelii (Sumatran orangutan).